Consider the following 242-residue polypeptide: Endoglucanase (242 aa).

The signal sequence occupies residues 1–21 (MQVIVLPLVFLATFATSGSLA). Catalysis depends on Asp-47, which acts as the Nucleophile. 3 N-linked (GlcNAc...) asparagine glycosylation sites follow: Asn-79, Asn-103, and Asn-217.

It belongs to the glycosyl hydrolase 45 (cellulase K) family. As to expression, expressed in larval carcasses and gut, and adult gut.

The protein localises to the secreted. It carries out the reaction Endohydrolysis of (1-&gt;4)-beta-D-glucosidic linkages in cellulose, lichenin and cereal beta-D-glucans.. This Phaedon cochleariae (Mustard beetle) protein is Endoglucanase.